The chain runs to 335 residues: N-acetylglucosaminyl-phosphatidylinositol de-N-acetylase (335 aa).

Residues serine 3 to leucine 23 traverse the membrane as a helical segment. Asparagine 128 and asparagine 153 each carry an N-linked (GlcNAc...) asparagine glycan.

Belongs to the PIGL family.

It is found in the endoplasmic reticulum membrane. It catalyses the reaction a 6-(N-acetyl-alpha-D-glucosaminyl)-1-(1,2-diacyl-sn-glycero-3-phospho)-1D-myo-inositol + H2O = a 6-(alpha-D-glucosaminyl)-1-(1,2-diacyl-sn-glycero-3-phospho)-1D-myo-inositol + acetate. It participates in glycolipid biosynthesis; glycosylphosphatidylinositol-anchor biosynthesis. Functionally, involved in the second step of GPI biosynthesis. De-N-acetylation of N-acetylglucosaminyl-phosphatidylinositol. This Arthroderma benhamiae (strain ATCC MYA-4681 / CBS 112371) (Trichophyton mentagrophytes) protein is N-acetylglucosaminyl-phosphatidylinositol de-N-acetylase.